The primary structure comprises 104 residues: Circadian clock oscillator protein KaiB (104 aa).

Belongs to the KaiB family. In terms of assembly, the KaiABC complex composition changes during the circadian cycle to control KaiC phosphorylation. Complexes KaiC(6), KaiA(2-4):KaiC(6), KaiB(6):KaiC(6) and KaiC(6):KaiB(6):KaiA(12) are among the most important forms, many form cooperatively. Undergoes a major conformational rearrangment; in the free state forms homotetramers as a dimer of dimers. When bound to the CI domain of KaiC switches to a monomeric thioredoxin-fold (KaiB(fs)). KaiB(fs) binds CikA, leading it to dephosphorylate phospho-RpaA.

Its function is as follows. Key component of the KaiABC oscillator complex, which constitutes the main circadian regulator in cyanobacteria. Complex composition changes during the circadian cycle to control KaiC phosphorylation. KaiA stimulates KaiC autophosphorylation, while KaiB sequesters KaiA, leading to KaiC autodephosphorylation. Phospho-Ser-431 KaiC accumulation triggers binding of KaiB to form the KaiB(6):KaiC(6) complex, leading to changes in output regulators CikA and SasA. KaiB switches to a thioredoxin-like fold (KaiB(fs)) when bound to KaiC. KaiB(6):KaiC(6) formation exposes a site for KaiA binding that sequesters KaiA from KaiC, making the KaiC(6):KaiB(6):KaiA(12) complex that results in KaiC autodephosphorylation. A metamorphic protein which reversibly switches between an inactive tetrameric fold and a rare, thioredoxin-like monomeric fold (KaiB(fs)). KaiB(fs) binds phospho-KaiC, KaiA and CikA. KaiA and CikA compete for binding to KaiB(fs), and KaiB(fs) and SasA compete for binding to KaiC, thus the clock oscillator and output signal pathway are tightly coupled. The chain is Circadian clock oscillator protein KaiB from Acaryochloris marina (strain MBIC 11017).